The following is a 343-amino-acid chain: MIEVGIVGGTGYTGVELLRLLARHPEARLRVITSRGNAGTRVDELFPSLRGEVELAFSEPDVDRLAACDLVFFATPNGTAMQMVPDLLARDTRVVDLGADFRLKDVETWSRWYGMTHACPELVAEAAYGLPELNREAIRGARLVANPGCYPTAVGLGWLPLLEAGLVETRGLVASCVSGASGAGRAANVATLLCEVNESFKAYGADGHRHLPEIRQSLAQVAGGAVELTFVPHLVPMTRGMHASLYATLRGDAGDLQVLFEQRYADEPFVDVLPAGAHPETRTVRGTNLCRLAVRRAPESDQVIVLSVIDNLTKGAAGQAVQNMNLMFGLPETAGLDAPAVLP.

Cys149 is a catalytic residue.

This sequence belongs to the NAGSA dehydrogenase family. Type 1 subfamily.

It is found in the cytoplasm. It catalyses the reaction N-acetyl-L-glutamate 5-semialdehyde + phosphate + NADP(+) = N-acetyl-L-glutamyl 5-phosphate + NADPH + H(+). It participates in amino-acid biosynthesis; L-arginine biosynthesis; N(2)-acetyl-L-ornithine from L-glutamate: step 3/4. In terms of biological role, catalyzes the NADPH-dependent reduction of N-acetyl-5-glutamyl phosphate to yield N-acetyl-L-glutamate 5-semialdehyde. This Alkalilimnicola ehrlichii (strain ATCC BAA-1101 / DSM 17681 / MLHE-1) protein is N-acetyl-gamma-glutamyl-phosphate reductase.